We begin with the raw amino-acid sequence, 43 residues long: Protein PsbN (43 aa).

The chain crosses the membrane as a helical span at residues 5–25 (TLISVFVASLVIGITAYAIFV).

This sequence belongs to the PsbN family.

It localises to the plastid. Its subcellular location is the chloroplast thylakoid membrane. Functionally, may play a role in photosystem I and II biogenesis. The chain is Protein PsbN from Cyanidioschyzon merolae (strain NIES-3377 / 10D) (Unicellular red alga).